The sequence spans 262 residues: Indole-3-glycerol phosphate synthase (262 aa).

The protein belongs to the TrpC family.

The enzyme catalyses 1-(2-carboxyphenylamino)-1-deoxy-D-ribulose 5-phosphate + H(+) = (1S,2R)-1-C-(indol-3-yl)glycerol 3-phosphate + CO2 + H2O. It functions in the pathway amino-acid biosynthesis; L-tryptophan biosynthesis; L-tryptophan from chorismate: step 4/5. The chain is Indole-3-glycerol phosphate synthase from Clostridium acetobutylicum (strain ATCC 824 / DSM 792 / JCM 1419 / IAM 19013 / LMG 5710 / NBRC 13948 / NRRL B-527 / VKM B-1787 / 2291 / W).